We begin with the raw amino-acid sequence, 219 residues long: 7-cyano-7-deazaguanine synthase (219 aa).

11–21 serves as a coordination point for ATP; the sequence is FSGGQDSTTCL. 4 residues coordinate Zn(2+): C188, C196, C199, and C202.

It belongs to the QueC family. Requires Zn(2+) as cofactor.

The catalysed reaction is 7-carboxy-7-deazaguanine + NH4(+) + ATP = 7-cyano-7-deazaguanine + ADP + phosphate + H2O + H(+). It participates in purine metabolism; 7-cyano-7-deazaguanine biosynthesis. Functionally, catalyzes the ATP-dependent conversion of 7-carboxy-7-deazaguanine (CDG) to 7-cyano-7-deazaguanine (preQ(0)). The chain is 7-cyano-7-deazaguanine synthase from Glaesserella parasuis serovar 5 (strain SH0165) (Haemophilus parasuis).